Reading from the N-terminus, the 429-residue chain is MPLCRPEHLMPRASRVPVAASLPLSHAVIPTQLPSRPGHRPPGRPRRCPKASCLPPPVGPSSTQTAKRVTMGWPRPGRALVAVKALLVLSLLQVPAQAVVRAVLEDNSSSVDFADLPALFGVPLAPEGIRGYLMEVKPANACHPIEAPRLGNRSLGAIVLIRRYDCTFDLKVLNAQRAGFEAAIVHNVHSDDLVSMTHVYEDLRGQIAIPSVFVSEAASQDLRVILGCNKSAHALLLPDDPPCHDLGCHPVLTVSWVLGCTLALVVSAFFVLNHLWLWAQACCSHRRPVKTSTCQKAQVRTFTWHNDLCAICLDEYEEGDQLKILPCSHTYHCKCIDPWFSQAPRRSCPVCKQSVAATEDSFDSTTYSFRDEDPSLPGHRPPIWAIQVQLRSRRLELLGRASPHCHCSTTSLEAEYTTVSSAPPEAPGQ.

The signal sequence occupies residues 1–27; it reads MPLCRPEHLMPRASRVPVAASLPLSHA. Topologically, residues 28 to 250 are lumenal; the sequence is VIPTQLPSRP…PPCHDLGCHP (223 aa). The interval 30-67 is disordered; that stretch reads PTQLPSRPGHRPPGRPRRCPKASCLPPPVGPSSTQTAK. Over residues 37–49 the composition is skewed to basic residues; it reads PGHRPPGRPRRCP. N-linked (GlcNAc...) asparagine glycans are attached at residues Asn107, Asn152, and Asn229. Residues 151–223 enclose the PA domain; that stretch reads GNRSLGAIVL…VSEAASQDLR (73 aa). A helical membrane pass occupies residues 251 to 271; the sequence is VLTVSWVLGCTLALVVSAFFV. The Cytoplasmic portion of the chain corresponds to 272-429; sequence LNHLWLWAQA…SSAPPEAPGQ (158 aa). The RING-type; atypical zinc-finger motif lies at 309-352; it reads CAICLDEYEEGDQLKILPCSHTYHCKCIDPWFSQAPRRSCPVCK.

In terms of assembly, interacts with CANX.

It is found in the endoplasmic reticulum membrane. The catalysed reaction is S-ubiquitinyl-[E2 ubiquitin-conjugating enzyme]-L-cysteine + [acceptor protein]-L-lysine = [E2 ubiquitin-conjugating enzyme]-L-cysteine + N(6)-ubiquitinyl-[acceptor protein]-L-lysine.. It functions in the pathway protein modification; protein ubiquitination. Functionally, E3 ubiquitin-protein ligase that acts as a negative regulator of NOD2 signaling by mediating ubiquitination and degradation of RIPK2. Also catalyzes ubiquitination and proteasomal degradation of CANX within the endoplasmic reticulum. Could have a role in spermatogenesis. This is E3 ubiquitin-protein ligase ZNRF4 from Homo sapiens (Human).